We begin with the raw amino-acid sequence, 72 residues long: Translation initiation factor IF-1 (72 aa).

The 72-residue stretch at 1–72 folds into the S1-like domain; that stretch reads MAKEELLEFP…TKGRITYRFK (72 aa).

The protein belongs to the IF-1 family. As to quaternary structure, component of the 30S ribosomal translation pre-initiation complex which assembles on the 30S ribosome in the order IF-2 and IF-3, IF-1 and N-formylmethionyl-tRNA(fMet); mRNA recruitment can occur at any time during PIC assembly.

The protein resides in the cytoplasm. In terms of biological role, one of the essential components for the initiation of protein synthesis. Stabilizes the binding of IF-2 and IF-3 on the 30S subunit to which N-formylmethionyl-tRNA(fMet) subsequently binds. Helps modulate mRNA selection, yielding the 30S pre-initiation complex (PIC). Upon addition of the 50S ribosomal subunit IF-1, IF-2 and IF-3 are released leaving the mature 70S translation initiation complex. The chain is Translation initiation factor IF-1 from Caulobacter vibrioides (strain ATCC 19089 / CIP 103742 / CB 15) (Caulobacter crescentus).